We begin with the raw amino-acid sequence, 261 residues long: Prostate-specific antigen (261 aa).

An N-terminal signal peptide occupies residues 1–17 (MWVPVVFLTLSVTWIGA). A propeptide spans 18–24 (APLILSR) (activation peptide). Positions 25–258 (IVGGWECEKH…YRKWIKDTIV (234 aa)) constitute a Peptidase S1 domain. 5 disulfides stabilise this stretch: Cys-31-Cys-173, Cys-50-Cys-66, Cys-152-Cys-219, Cys-184-Cys-198, and Cys-209-Cys-234. His-65 (charge relay system) is an active-site residue. An N-linked (GlcNAc...) asparagine glycan is attached at Asn-69. Asp-120 functions as the Charge relay system in the catalytic mechanism. The active-site Charge relay system is the Ser-213.

It belongs to the peptidase S1 family. Kallikrein subfamily. Forms a heterodimer with SERPINA5.

The protein localises to the secreted. The enzyme catalyses Preferential cleavage: -Tyr-|-Xaa-.. With respect to regulation, inhibited by SERPINA5. Activity is strongly inhibited by Zn2+, 100 times more abundant in semen than in serum. This inhibition is relieved by exposure to semenogelins, which are avid zinc binders. Its function is as follows. Hydrolyzes semenogelin-1 thus leading to the liquefaction of the seminal coagulum. This is Prostate-specific antigen (KLK3) from Homo sapiens (Human).